The primary structure comprises 259 residues: Ribose-5-phosphate isomerase (259 aa).

The protein belongs to the ribose 5-phosphate isomerase family.

The protein resides in the cytoplasm. It carries out the reaction aldehydo-D-ribose 5-phosphate = D-ribulose 5-phosphate. It participates in carbohydrate degradation; pentose phosphate pathway; D-ribose 5-phosphate from D-ribulose 5-phosphate (non-oxidative stage): step 1/1. The protein is Ribose-5-phosphate isomerase (RKI1) of Vanderwaltozyma polyspora (strain ATCC 22028 / DSM 70294 / BCRC 21397 / CBS 2163 / NBRC 10782 / NRRL Y-8283 / UCD 57-17) (Kluyveromyces polysporus).